The following is a 217-amino-acid chain: Large ribosomal subunit protein uL3 (217 aa).

Residues 137–160 (VSASHGSHRNHRKPGSIGASSTPS) are disordered.

It belongs to the universal ribosomal protein uL3 family. In terms of assembly, part of the 50S ribosomal subunit. Forms a cluster with proteins L14 and L19.

One of the primary rRNA binding proteins, it binds directly near the 3'-end of the 23S rRNA, where it nucleates assembly of the 50S subunit. This is Large ribosomal subunit protein uL3 from Clavibacter sepedonicus (Clavibacter michiganensis subsp. sepedonicus).